Here is a 288-residue protein sequence, read N- to C-terminus: 2-hydroxy-6-oxononadienedioate/2-hydroxy-6-oxononatrienedioate hydrolase (288 aa).

Residues 38–274 enclose the AB hydrolase-1 domain; sequence ALVLLHGSGP…RCGHWAQWEH (237 aa). Residue histidine 268 is the Proton acceptor of the active site.

This sequence belongs to the AB hydrolase superfamily. MhpC family. In terms of assembly, homodimer.

The catalysed reaction is (2Z,4E)-2-hydroxy-6-oxonona-2,4-dienedioate + H2O = (2Z)-2-hydroxypenta-2,4-dienoate + succinate + H(+). It catalyses the reaction (2Z,4E,7E)-2-hydroxy-6-oxonona-2,4,7-trienedioate + H2O = (2Z)-2-hydroxypenta-2,4-dienoate + fumarate + H(+). Its pathway is aromatic compound metabolism; 3-phenylpropanoate degradation. Functionally, catalyzes the cleavage of the C5-C6 bond of 2-hydroxy-6-oxononadienedioate and 2-hydroxy-6-oxononatrienedioate, a dienol ring fission product of the bacterial meta-cleavage pathway for degradation of phenylpropionic acid. The polypeptide is 2-hydroxy-6-oxononadienedioate/2-hydroxy-6-oxononatrienedioate hydrolase (Burkholderia vietnamiensis (strain G4 / LMG 22486) (Burkholderia cepacia (strain R1808))).